The chain runs to 239 residues: tRNA (guanine-N(1)-)-methyltransferase (239 aa).

Residues Gly-113 and 137–142 (LGDYVL) each bind S-adenosyl-L-methionine.

It belongs to the RNA methyltransferase TrmD family. Homodimer.

It is found in the cytoplasm. It catalyses the reaction guanosine(37) in tRNA + S-adenosyl-L-methionine = N(1)-methylguanosine(37) in tRNA + S-adenosyl-L-homocysteine + H(+). Functionally, specifically methylates guanosine-37 in various tRNAs. This chain is tRNA (guanine-N(1)-)-methyltransferase, found in Cutibacterium acnes (strain DSM 16379 / KPA171202) (Propionibacterium acnes).